The following is a 277-amino-acid chain: MNTRSYSTFTPGTRDKSLSSFDGKVKSHPQKKLTSGQHRCGKGRNNSGIITIRHRGGGHKRLYRQIDFRRSEKNNILGKIVTIESDPNRSAYICLVHYRDGQKTYILHPRGIMIGDTILSGPRAPISMGNALPLTNIPLGTTIHNVEVQVGKGGQLARAAGAVAELIAKEGRLTTLRLPSGEVRLISENCLATIGQVGNVKWKNRTLSKAGSKRWLGKRPEVRGVVMNAVDHPHGGGEGRAPIGRKKPLTPWGYSALGKKSRKRNKYSDVSILRRRK.

Over residues M1–P11 the composition is skewed to polar residues. Disordered regions lie at residues M1–S47 and Y254–K277.

Belongs to the universal ribosomal protein uL2 family. In terms of assembly, part of the 50S ribosomal subunit.

It localises to the plastid. The protein resides in the chloroplast. The protein is Large ribosomal subunit protein uL2c (rpl2) of Cryptomeria japonica (Japanese cedar).